A 215-amino-acid chain; its full sequence is Heart- and neural crest derivatives-expressed protein 1 (215 aa).

Disordered regions lie at residues 53 to 109 (APDF…RTES) and 169 to 202 (VDGGRESKRKRELQQHEGFPPALGPGEKRIKGRT). A compositionally biased stretch (low complexity) spans 65 to 75 (AAAAAATYGPD). Over residues 92–104 (LGRRKGSGPKKER) the composition is skewed to basic residues. The region spanning 94–146 (RRKGSGPKKERRRTESINSAFAELRECIPNVPADTKLSKIKTLRLATSYIAYL) is the bHLH domain. Phosphothreonine; by PLK4 is present on Thr-107. Ser-109 bears the Phosphoserine; by PLK4 mark.

In terms of assembly, efficient DNA binding requires dimerization with another bHLH protein. Forms homodimers and heterodimers with TCF3 gene products E12 and E47, HAND2 and HEY1, HEY2 and HEYL (hairy-related transcription factors). Interacts with MDFIC. Interacts with SOX15; the interaction enhances HAND1-induced differentiation of trophoblast giant cells. Post-translationally, phosphorylation by PLK4 disrupts the interaction with MDFIC and leads to translocation into the nucleoplasm, allowing dimerization and transcription factor activity.

It localises to the nucleus. Its subcellular location is the nucleoplasm. The protein resides in the nucleolus. Transcription factor that plays an essential role in both trophoblast giant cell differentiation and in cardiac morphogenesis. Binds the DNA sequence 5'-NRTCTG-3' (non-canonical E-box). Acts as a transcriptional repressor of SOX15. In the adult, could be required for ongoing expression of cardiac-specific genes. The chain is Heart- and neural crest derivatives-expressed protein 1 (HAND1) from Oryctolagus cuniculus (Rabbit).